Reading from the N-terminus, the 697-residue chain is Serine/threonine-protein kinase tousled-like 2 (697 aa).

2 disordered regions span residues 25 to 159 (VAKG…SQSE) and 288 to 316 (KLLI…SKSN). The span at 31 to 44 (HNESSNQSLCSVGS) shows a compositional bias: polar residues. Positions 46–61 (SDKELETPEKKSNDQR) are enriched in basic and acidic residues. Residues 109 to 145 (SSPQHSLSNPPAAVQQGSPSSISSVNTDHSHTSTSHK) are compositionally biased toward polar residues. Coiled coils occupy residues 265–294 (AFQN…IKKK) and 336–373 (KLRL…IHNE). Residues 388 to 666 (YLLLHLLGRG…VHQLASDPYL (279 aa)) form the Protein kinase domain. Residues 394-402 (LGRGGFSEV) and Lys417 contribute to the ATP site. Asp518 functions as the Proton acceptor in the catalytic mechanism.

It belongs to the protein kinase superfamily. Ser/Thr protein kinase family. Monomer. May form homodimers; homodimerization may enhance autophosphoylation and enzymatic activity. Heterodimer with TLK1. It depends on Mg(2+) as a cofactor. In terms of processing, phosphorylated. Autophosphorylated; phosphorylation promotes the assembly of higher order oligomers and enzymatic activity.

Its subcellular location is the nucleus. The protein resides in the nucleoplasm. It is found in the cytoplasm. It localises to the perinuclear region. The protein localises to the cytoskeleton. It catalyses the reaction L-seryl-[protein] + ATP = O-phospho-L-seryl-[protein] + ADP + H(+). The catalysed reaction is L-threonyl-[protein] + ATP = O-phospho-L-threonyl-[protein] + ADP + H(+). In terms of biological role, serine/threonine-protein kinase involved in the process of chromatin assembly and probably also DNA replication, transcription, repair, and chromosome segregation. Negative regulator of amino acid starvation-induced autophagy. The chain is Serine/threonine-protein kinase tousled-like 2 from Danio rerio (Zebrafish).